The chain runs to 478 residues: Phenylalanine--tRNA ligase alpha subunit (478 aa).

L-phenylalanine contacts are provided by residues Thr-318, 357-359 (QLE), and Tyr-397. Residue Glu-399 participates in Mg(2+) binding. Phe-422 lines the L-phenylalanine pocket.

Belongs to the class-II aminoacyl-tRNA synthetase family. Phe-tRNA synthetase alpha subunit type 2 subfamily. As to quaternary structure, tetramer of two alpha and two beta subunits. Mg(2+) is required as a cofactor.

It is found in the cytoplasm. The enzyme catalyses tRNA(Phe) + L-phenylalanine + ATP = L-phenylalanyl-tRNA(Phe) + AMP + diphosphate + H(+). In Methanospirillum hungatei JF-1 (strain ATCC 27890 / DSM 864 / NBRC 100397 / JF-1), this protein is Phenylalanine--tRNA ligase alpha subunit.